The primary structure comprises 3218 residues: Serine/threonine-protein kinase Smg1 (3218 aa).

The segment at 32-78 is disordered; it reads LNNNGNHGDSSNEGGGGNGSGRGGATGSGNIAGLGGSESMWSPGGGK. Positions 33-43 are enriched in low complexity; sequence NNNGNHGDSSN. Gly residues predominate over residues 44–67; sequence EGGGGNGSGRGGATGSGNIAGLGG. The residue at position 70 (serine 70) is a Phosphoserine. The FAT domain occupies 1289–1692; that stretch reads DAAAAAREEG…IFPAVVGANR (404 aa). The HEAT repeat unit spans residues 1643 to 1678; sequence APWKVIIPQLFSRLNHHEPYVRKSVCDLLCRLAKSR. In terms of domain architecture, PI3K/PI4K catalytic spans 1897-2232; that stretch reads VESSVCVLPT…LGVGDLKYHK (336 aa). Positions 1903–1909 are G-loop; the sequence is VLPTKTK. A catalytic loop region spans residues 2101–2109; the sequence is GLGDRHLDN. The activation loop stretch occupies residues 2121–2145; that stretch reads HIDYNVCFEKGRTLRIPEKVPFRLT. Residues 3186-3218 enclose the FATC domain; the sequence is QRSTVAEQVDYVIREACNPENLAVLYEGWTPWV.

It belongs to the PI3/PI4-kinase family. In terms of assembly, component of a post-splicing multiprotein NMD complex. Requires Mn(2+) as cofactor.

It localises to the cytoplasm. The catalysed reaction is L-seryl-[protein] + ATP = O-phospho-L-seryl-[protein] + ADP + H(+). It carries out the reaction L-threonyl-[protein] + ATP = O-phospho-L-threonyl-[protein] + ADP + H(+). Serine/threonine protein kinase involved in mRNA surveillance. Recognizes the substrate consensus sequence [ST]-Q. Involved in nonsense-mediated decay (NMD) of mRNAs containing premature stop codons, probably by phosphorylating Upf1. The protein is Serine/threonine-protein kinase Smg1 (nonC) of Drosophila melanogaster (Fruit fly).